The primary structure comprises 185 residues: Ribosome-recycling factor (185 aa).

It belongs to the RRF family.

The protein localises to the cytoplasm. Its function is as follows. Responsible for the release of ribosomes from messenger RNA at the termination of protein biosynthesis. May increase the efficiency of translation by recycling ribosomes from one round of translation to another. This Wolbachia pipientis wMel protein is Ribosome-recycling factor.